The primary structure comprises 28 residues: Alkaline serine protease NJP (28 aa).

With respect to regulation, inhibited by PMSF. Not or very weakly inhibited by EDTA, EGTA, beta-mercaptoethanol, benzamidine, aprotinin, iodoacetic acid, pepstatin A and SBTI. In terms of biological role, alkaline thrombin-like serine protease. Has fibrinolytic and fibrinogenolytic but not plasminogenolytic activity. Cleaves fibrinogen chains Aalpha, Bbeta and gamma chains in that order. Cleaves after Arg and Lys residues. The chain is Alkaline serine protease NJP from Hediste japonica (Polychaete worm).